The sequence spans 202 residues: NADH-quinone oxidoreductase subunit C (202 aa).

Belongs to the complex I 30 kDa subunit family. NDH-1 is composed of 14 different subunits. Subunits NuoB, C, D, E, F, and G constitute the peripheral sector of the complex.

The protein localises to the cell inner membrane. It carries out the reaction a quinone + NADH + 5 H(+)(in) = a quinol + NAD(+) + 4 H(+)(out). Its function is as follows. NDH-1 shuttles electrons from NADH, via FMN and iron-sulfur (Fe-S) centers, to quinones in the respiratory chain. The immediate electron acceptor for the enzyme in this species is believed to be ubiquinone. Couples the redox reaction to proton translocation (for every two electrons transferred, four hydrogen ions are translocated across the cytoplasmic membrane), and thus conserves the redox energy in a proton gradient. This is NADH-quinone oxidoreductase subunit C from Bartonella quintana (strain Toulouse) (Rochalimaea quintana).